Here is a 154-residue protein sequence, read N- to C-terminus: Large ribosomal subunit protein uL13 (154 aa).

The protein belongs to the universal ribosomal protein uL13 family. Part of the 50S ribosomal subunit.

In terms of biological role, this protein is one of the early assembly proteins of the 50S ribosomal subunit, although it is not seen to bind rRNA by itself. It is important during the early stages of 50S assembly. This is Large ribosomal subunit protein uL13 from Rhodopseudomonas palustris (strain BisB5).